The primary structure comprises 429 residues: Adenylosuccinate synthetase (429 aa).

Residues 13–19 (GDEGKGK) and 41–43 (GHT) contribute to the GTP site. Asp-14 acts as the Proton acceptor in catalysis. Residues Asp-14 and Gly-41 each contribute to the Mg(2+) site. Residues 14–17 (DEGK), 39–42 (NAGH), Thr-130, Arg-144, Gln-225, Thr-240, and Arg-304 contribute to the IMP site. The active-site Proton donor is His-42. Substrate is bound at residue 300-306 (ATTGRAR). Residues Arg-306, 332 to 334 (KLD), and 413 to 415 (STG) each bind GTP.

It belongs to the adenylosuccinate synthetase family. Homodimer. Requires Mg(2+) as cofactor.

It localises to the cytoplasm. It carries out the reaction IMP + L-aspartate + GTP = N(6)-(1,2-dicarboxyethyl)-AMP + GDP + phosphate + 2 H(+). It functions in the pathway purine metabolism; AMP biosynthesis via de novo pathway; AMP from IMP: step 1/2. Plays an important role in the de novo pathway of purine nucleotide biosynthesis. Catalyzes the first committed step in the biosynthesis of AMP from IMP. The sequence is that of Adenylosuccinate synthetase from Pseudomonas fluorescens (strain SBW25).